We begin with the raw amino-acid sequence, 171 residues long: Transcription antitermination protein NusB (171 aa).

It belongs to the NusB family.

Functionally, involved in transcription antitermination. Required for transcription of ribosomal RNA (rRNA) genes. Binds specifically to the boxA antiterminator sequence of the ribosomal RNA (rrn) operons. This is Transcription antitermination protein NusB from Brucella suis (strain ATCC 23445 / NCTC 10510).